A 182-amino-acid polypeptide reads, in one-letter code: NADH-quinone oxidoreductase subunit B (182 aa).

[4Fe-4S] cluster contacts are provided by cysteine 61, cysteine 62, cysteine 126, and cysteine 156.

This sequence belongs to the complex I 20 kDa subunit family. As to quaternary structure, NDH-1 is composed of 14 different subunits. Subunits NuoB, C, D, E, F, and G constitute the peripheral sector of the complex. The cofactor is [4Fe-4S] cluster.

Its subcellular location is the cell inner membrane. It carries out the reaction a quinone + NADH + 5 H(+)(in) = a quinol + NAD(+) + 4 H(+)(out). Functionally, NDH-1 shuttles electrons from NADH, via FMN and iron-sulfur (Fe-S) centers, to quinones in the respiratory chain. The immediate electron acceptor for the enzyme in this species is believed to be ubiquinone. Couples the redox reaction to proton translocation (for every two electrons transferred, four hydrogen ions are translocated across the cytoplasmic membrane), and thus conserves the redox energy in a proton gradient. The polypeptide is NADH-quinone oxidoreductase subunit B (Xanthomonas oryzae pv. oryzae (strain PXO99A)).